A 62-amino-acid chain; its full sequence is Protein DsrB (62 aa).

This sequence belongs to the DsrB family.

This Escherichia fergusonii (strain ATCC 35469 / DSM 13698 / CCUG 18766 / IAM 14443 / JCM 21226 / LMG 7866 / NBRC 102419 / NCTC 12128 / CDC 0568-73) protein is Protein DsrB.